Consider the following 345-residue polypeptide: PI-PLC X domain-containing protein 1 (345 aa).

In terms of domain architecture, PI-PLC X-box spans 52–228; that stretch reads QLWDVPLHHL…QVIVSYEDEA (177 aa).

In terms of tissue distribution, expressed at highest levels in brain and kidney. Also detected in stomach, thymus and skeletal muscle.

Its subcellular location is the cytoplasm. The chain is PI-PLC X domain-containing protein 1 (Plcxd1) from Mus musculus (Mouse).